The chain runs to 364 residues: CLIP domain-containing serine protease B15 (364 aa).

The N-terminal stretch at methionine 1–alanine 19 is a signal peptide. Residues proline 30–cysteine 89 form the Clip domain. 3 cysteine pairs are disulfide-bonded: cysteine 31/cysteine 88, cysteine 41/cysteine 72, and cysteine 47/cysteine 89. A glycan (N-linked (GlcNAc...) asparagine) is linked at asparagine 46. The Peptidase S1 domain maps to isoleucine 107–phenylalanine 359. N-linked (GlcNAc...) asparagine glycosylation is present at asparagine 131. A disulfide bridge links cysteine 137 with cysteine 153. Histidine 152 acts as the Charge relay system in catalysis. N-linked (GlcNAc...) asparagine glycans are attached at residues asparagine 171, asparagine 177, and asparagine 206. Residue aspartate 212 is the Charge relay system of the active site. A disulfide bridge connects residues cysteine 279 and cysteine 296. 2 N-linked (GlcNAc...) asparagine glycosylation sites follow: asparagine 287 and asparagine 301. Cysteine 306 and cysteine 335 are oxidised to a cystine. The active-site Charge relay system is serine 310.

This sequence belongs to the peptidase S1 family. CLIP subfamily. N-glycosylated. Post-translationally, proteolytically cleaved. In terms of tissue distribution, expressed by a subpopulation of hemocytes.

Its subcellular location is the secreted. In terms of biological role, serine protease. Plays a role in innate immunity against infections by parasite P.berghei and by Gram-negative bacteria such as E.coli. In response to P.berghei infection, contributes to the clearing of parasite ookinetes independent of melanization, an innate immune response which consists in the deposition of melanin pigments on invading pathogens and parasites. The polypeptide is CLIP domain-containing serine protease B15 (Anopheles gambiae (African malaria mosquito)).